We begin with the raw amino-acid sequence, 169 residues long: Disulfide bond formation protein B 1 (169 aa).

At 1–14 (MSEETIRLGRERRY) the chain is on the cytoplasmic side. A helical membrane pass occupies residues 15 to 31 (LVLLGIICLALIGGALY). Topologically, residues 32–49 (MQIVLGEAPCPLCILQRY) are periplasmic. Cys41 and Cys44 are joined by a disulfide. Residues 50–64 (ALLLIALFAFIGAAM) form a helical membrane-spanning segment. Topologically, residues 65–71 (RTRRSIT) are cytoplasmic. Residues 72 to 89 (VFEVLVVICAIAGAGVAG) form a helical membrane-spanning segment. Residues 90–144 (HHVYTQFYPAVSCGIDVLQPIVDDLPLAKIFPLGFQVDGFCSTPYPPILGLSLAQ) lie on the Periplasmic side of the membrane. Cys102 and Cys130 are disulfide-bonded. A helical membrane pass occupies residues 145–163 (WALVAFVLVVILVPLLTSR). Residues 164–169 (NRKALR) are Cytoplasmic-facing.

It belongs to the DsbB family.

The protein resides in the cell inner membrane. Functionally, required for disulfide bond formation in some periplasmic proteins. Acts by oxidizing the DsbA protein. The protein is Disulfide bond formation protein B 1 of Pseudomonas fluorescens (strain Pf0-1).